A 496-amino-acid polypeptide reads, in one-letter code: Putative BTB/POZ domain and WD-repeat protein R61 (496 aa).

Positions 8 to 78 constitute a BTB domain; the sequence is SNINLILNDE…MFSDIDIYKN (71 aa). 6 WD repeats span residues 149–189, 208–248, 250–285, 291–330, 333–371, and 422–464; these read KFPR…FNSK, IFDN…KEFQ, DYKINDICFSPDGKSCVCANKFLSIYDLDNGRRKVL, KSIGCIKTCVCWTSDNIIACGDSDGVIEFWNAETNLIIKW, VSKSRISNISFSPDRSQIAVSNQTKIILYDSIFDKKILE, and MYFS…DIIY.

The protein belongs to the mimivirus BTB/WD family.

The sequence is that of Putative BTB/POZ domain and WD-repeat protein R61 from Acanthamoeba polyphaga (Amoeba).